The primary structure comprises 166 residues: NAD(P)H-quinone oxidoreductase subunit I, chloroplastic (166 aa).

2 4Fe-4S ferredoxin-type domains span residues 55-84 (GRIH…VDWK) and 95-124 (LNYS…MTEE). Positions 64, 67, 70, 74, 104, 107, 110, and 114 each coordinate [4Fe-4S] cluster.

This sequence belongs to the complex I 23 kDa subunit family. NDH is composed of at least 16 different subunits, 5 of which are encoded in the nucleus. The cofactor is [4Fe-4S] cluster.

The protein resides in the plastid. It localises to the chloroplast thylakoid membrane. It catalyses the reaction a plastoquinone + NADH + (n+1) H(+)(in) = a plastoquinol + NAD(+) + n H(+)(out). The catalysed reaction is a plastoquinone + NADPH + (n+1) H(+)(in) = a plastoquinol + NADP(+) + n H(+)(out). Functionally, NDH shuttles electrons from NAD(P)H:plastoquinone, via FMN and iron-sulfur (Fe-S) centers, to quinones in the photosynthetic chain and possibly in a chloroplast respiratory chain. The immediate electron acceptor for the enzyme in this species is believed to be plastoquinone. Couples the redox reaction to proton translocation, and thus conserves the redox energy in a proton gradient. The sequence is that of NAD(P)H-quinone oxidoreductase subunit I, chloroplastic from Encelia californica (Bush sunflower).